A 63-amino-acid polypeptide reads, in one-letter code: Large ribosomal subunit protein uL29 (63 aa).

Belongs to the universal ribosomal protein uL29 family.

This chain is Large ribosomal subunit protein uL29, found in Shewanella frigidimarina (strain NCIMB 400).